We begin with the raw amino-acid sequence, 199 residues long: Probable nicotinate-nucleotide adenylyltransferase (199 aa).

The protein belongs to the NadD family.

It catalyses the reaction nicotinate beta-D-ribonucleotide + ATP + H(+) = deamido-NAD(+) + diphosphate. It participates in cofactor biosynthesis; NAD(+) biosynthesis; deamido-NAD(+) from nicotinate D-ribonucleotide: step 1/1. In terms of biological role, catalyzes the reversible adenylation of nicotinate mononucleotide (NaMN) to nicotinic acid adenine dinucleotide (NaAD). This chain is Probable nicotinate-nucleotide adenylyltransferase, found in Leptospira interrogans serogroup Icterohaemorrhagiae serovar copenhageni (strain Fiocruz L1-130).